The following is a 197-amino-acid chain: CASP-like protein 1B2 (197 aa).

Ala-2 carries the post-translational modification N-acetylalanine. Topologically, residues 2-17 (AREKIVVAGGTTKSWK) are cytoplasmic. The helical transmembrane segment at 18–38 (LLLGLRIFAFMATLAAAIVMS) threads the bilayer. Topologically, residues 39–69 (LNKETKTLVVATIGTVPIKATLTAKFQHTPA) are extracellular. The helical transmembrane segment at 70 to 90 (FVFFVIANVMVSFHNLLMIVV) threads the bilayer. The Cytoplasmic segment spans residues 91-106 (QIFSRKLEYKGLRLLS). Residues 107–127 (IAILDMLNATLVSAAANAAVF) form a helical membrane-spanning segment. Over 128–156 (VAELGKNGNKHAKWNKVCDRFTTYCDHGA) the chain is Extracellular. The helical transmembrane segment at 157 to 177 (GAIIAAFAGVILMLLVSAVSI) threads the bilayer. Topologically, residues 178–197 (SRLLINSKNFSTTATTTSVV) are cytoplasmic.

The protein belongs to the Casparian strip membrane proteins (CASP) family. Homodimer and heterodimers.

The protein localises to the cell membrane. The sequence is that of CASP-like protein 1B2 from Arabidopsis thaliana (Mouse-ear cress).